A 476-amino-acid polypeptide reads, in one-letter code: Proline--tRNA ligase 2 (476 aa).

This sequence belongs to the class-II aminoacyl-tRNA synthetase family. ProS type 3 subfamily. As to quaternary structure, homodimer.

It is found in the cytoplasm. It catalyses the reaction tRNA(Pro) + L-proline + ATP = L-prolyl-tRNA(Pro) + AMP + diphosphate. Functionally, catalyzes the attachment of proline to tRNA(Pro) in a two-step reaction: proline is first activated by ATP to form Pro-AMP and then transferred to the acceptor end of tRNA(Pro). This chain is Proline--tRNA ligase 2, found in Bacillus cereus (strain ZK / E33L).